The primary structure comprises 177 residues: NAD(P)H-quinone oxidoreductase subunit 6, chloroplastic (177 aa).

The next 5 membrane-spanning stretches (helical) occupy residues 10–30 (VLLV…VLLT), 32–52 (PIYS…FYIL), 61–81 (AQLL…VMFM), 90–112 (FYLW…FSLI), and 152–172 (FYLP…GAIT).

It belongs to the complex I subunit 6 family. NDH is composed of at least 16 different subunits, 5 of which are encoded in the nucleus.

The protein resides in the plastid. It is found in the chloroplast thylakoid membrane. It catalyses the reaction a plastoquinone + NADH + (n+1) H(+)(in) = a plastoquinol + NAD(+) + n H(+)(out). It carries out the reaction a plastoquinone + NADPH + (n+1) H(+)(in) = a plastoquinol + NADP(+) + n H(+)(out). Functionally, NDH shuttles electrons from NAD(P)H:plastoquinone, via FMN and iron-sulfur (Fe-S) centers, to quinones in the photosynthetic chain and possibly in a chloroplast respiratory chain. The immediate electron acceptor for the enzyme in this species is believed to be plastoquinone. Couples the redox reaction to proton translocation, and thus conserves the redox energy in a proton gradient. This chain is NAD(P)H-quinone oxidoreductase subunit 6, chloroplastic (ndhG), found in Acorus calamus var. americanus (American sweet flag).